Consider the following 375-residue polypeptide: Queuine tRNA-ribosyltransferase (375 aa).

Residue Asp-89 is the Proton acceptor of the active site. Substrate contacts are provided by residues 89–93 (DSGGF), Asp-143, Gln-187, and Gly-214. Residues 245–251 (GVGKPED) are RNA binding. The Nucleophile role is filled by Asp-264. The RNA binding; important for wobble base 34 recognition stretch occupies residues 269–273 (TRNAR). Zn(2+)-binding residues include Cys-302, Cys-304, Cys-307, and His-333.

The protein belongs to the queuine tRNA-ribosyltransferase family. In terms of assembly, homodimer. Within each dimer, one monomer is responsible for RNA recognition and catalysis, while the other monomer binds to the replacement base PreQ1. It depends on Zn(2+) as a cofactor.

It carries out the reaction 7-aminomethyl-7-carbaguanine + guanosine(34) in tRNA = 7-aminomethyl-7-carbaguanosine(34) in tRNA + guanine. Its pathway is tRNA modification; tRNA-queuosine biosynthesis. Functionally, catalyzes the base-exchange of a guanine (G) residue with the queuine precursor 7-aminomethyl-7-deazaguanine (PreQ1) at position 34 (anticodon wobble position) in tRNAs with GU(N) anticodons (tRNA-Asp, -Asn, -His and -Tyr). Catalysis occurs through a double-displacement mechanism. The nucleophile active site attacks the C1' of nucleotide 34 to detach the guanine base from the RNA, forming a covalent enzyme-RNA intermediate. The proton acceptor active site deprotonates the incoming PreQ1, allowing a nucleophilic attack on the C1' of the ribose to form the product. After dissociation, two additional enzymatic reactions on the tRNA convert PreQ1 to queuine (Q), resulting in the hypermodified nucleoside queuosine (7-(((4,5-cis-dihydroxy-2-cyclopenten-1-yl)amino)methyl)-7-deazaguanosine). In Salmonella agona (strain SL483), this protein is Queuine tRNA-ribosyltransferase.